The sequence spans 550 residues: Solute carrier family 22 member 6 (550 aa).

Residues 1–9 (MAFNDLLQQ) lie on the Cytoplasmic side of the membrane. Residues 10-30 (VGGVGRFQQIQVTLVVLPLLL) form a helical membrane-spanning segment. Residues 31–135 (MASHNTLQNF…LVCSHRALRQ (105 aa)) are Extracellular-facing. Residues Asn39, Asn92, and Asn113 are each glycosylated (N-linked (GlcNAc...) asparagine). The helical transmembrane segment at 136–156 (LAQSLYMVGVLLGAMVFGYLA) threads the bilayer. Topologically, residues 157 to 164 (DRLGRRKV) are cytoplasmic. The chain crosses the membrane as a helical span at residues 165 to 187 (LILNYLQTAVSGTCTAFAPNFSI). At 188–195 (YCAFRLLS) the chain is on the extracellular side. Residues 196–216 (GMSLAGISLNCMTLNVEWMPI) form a helical membrane-spanning segment. The Cytoplasmic portion of the chain corresponds to 217 to 224 (HTRACVGT). The helical transmembrane segment at 225 to 245 (LIGYVYSLGQFLLAGVAYAVP) threads the bilayer. Residues 246–248 (HWR) lie on the Extracellular side of the membrane. Residues 249–269 (HLQLLVSAPFFAFFIYSWFFI) form a helical membrane-spanning segment. The Cytoplasmic portion of the chain corresponds to 270–337 (ESARWHSSSG…ELLRCPTLRH (68 aa)). The chain crosses the membrane as a helical span at residues 338–358 (LFLCLSMLWFATSFAYYGLVM). Residues 359–368 (DLQGFGVSIY) lie on the Extracellular side of the membrane. A helical membrane pass occupies residues 369–389 (LIQVIFGAVDLPAKLVGFLVI). The Cytoplasmic portion of the chain corresponds to 390 to 395 (NSLGRR). A helical membrane pass occupies residues 396–416 (PAQMAALLLAGICILLNGVIP). Residues 417–420 (QDQS) are Extracellular-facing. A helical membrane pass occupies residues 421-444 (IVRTSLAVPGKGCLAASFNCIFLY). The Cytoplasmic portion of the chain corresponds to 445–455 (TGELYPTMIRQ). Residues 456–475 (TGMGMGSTMARVGSIVSPLV) traverse the membrane as a helical segment. The Extracellular segment spans residues 476–484 (SMTAELYPS). The helical transmembrane segment at 485-505 (MPLFIYGAVPVAASAVTVLLP) threads the bilayer. At 506–550 (ETLGQPLPDTVQDLESRKGKQTRQQQEHQKYMVPLQASAQEKNGL) the chain is on the cytoplasmic side. Positions 514–550 (DTVQDLESRKGKQTRQQQEHQKYMVPLQASAQEKNGL) are disordered.

Belongs to the major facilitator (TC 2.A.1) superfamily. Organic cation transporter (TC 2.A.1.19) family. In terms of processing, glycosylated. Glycosylation is necessary for proper targeting of the transporter to the plasma membrane.

It is found in the cell membrane. It catalyses the reaction prostaglandin F2alpha(out) = prostaglandin F2alpha(in). The catalysed reaction is prostaglandin E2(out) = prostaglandin E2(in). Functionally, involved in the renal elimination of endogenous and exogenous organic anions. Functions as organic anion exchanger when the uptake of one molecule of organic anion is coupled with an efflux of one molecule of endogenous dicarboxylic acid (glutarate, ketoglutarate, etc). Mediates the transport of prostaglandin E2 (PGE2) and prostaglandin F2-alpha (PGF2-alpha) and may be involved in their renal excretion. Also mediates the sodium-independent uptake of p-aminohippurate (PAH), 2,3-dimercapto-1-propanesulfonic acid (DMPS), cidofovir, adefovir, 9-(2-phosphonylmethoxyethyl) guanine (PMEG), 9-(2-phosphonylmethoxyethyl) diaminopurine (PMEDAP), ochratoxin (OTA), acyclovir (ACV), 3'-azido-3-'deoxythymidine (AZT), cimetidine (CMD), 2,4-dichloro-phenoxyacetate (2,4-D), hippurate (HA), indoleacetate (IA), indoxyl sulfate (IS) and 3-carboxy-4-methyl-5-propyl-2-furanpropionate (CMPF) and edaravone sulfate. PAH uptake is inhibited by p-chloromercuribenzenesulphonate (PCMBS), diethyl pyrocarbonate (DEPC), indomethacin, sulindac, diclofenac, carprofen, okadaic acid, benzothiazolylcysteine (BTC), S-chlorotrifluoroethylcysteine (CTFC), cysteine S-conjugates S-dichlorovinylcysteine (DCVC), furosemide, steviol, phorbol 12-myristate 13-acetate (PMA), calcium ionophore A23187, benzylpenicillin, bumetamide, losartan, probenecid, phenol red, urate, glutarate and alpha-ketoglutarate. The sequence is that of Solute carrier family 22 member 6 (SLC22A6) from Pongo abelii (Sumatran orangutan).